Consider the following 904-residue polypeptide: DNA replication licensing factor MCM2 (904 aa).

Low complexity predominate over residues 1–12; that stretch reads MAESSESLSASS. The tract at residues 1-166 is disordered; it reads MAESSESLSA…ATEDGEEDEE (166 aa). At Ala-2 the chain carries N-acetylalanine. Residues 2–257 are interaction with KAT7; that stretch reads AESSESLSAS…LPEAPAELLQ (256 aa). Ser-12 and Ser-21 each carry phosphoserine. Phosphothreonine is present on Thr-25. Residues Ser-26, Ser-27, and Ser-32 each carry the phosphoserine modification. Thr-39 carries the post-translational modification Phosphothreonine. Ser-40 is subject to Phosphoserine; by CDC7. Residue Ser-41 is modified to Phosphoserine. The residue at position 53 (Ser-53) is a Phosphoserine; by CDC7. Thr-59 carries the post-translational modification Phosphothreonine. The segment at 61 to 130 is interaction with DNJC9; sequence GPMEEEEDGE…DREAGRGLGR (70 aa). The span at 62–73 shows a compositional bias: acidic residues; sequence PMEEEEDGEELI. The segment covering 76–85 has biased composition (basic and acidic residues); the sequence is GMERDYRPIP. Residues 88 to 104 are compositionally biased toward acidic residues; it reads DVYEAEGLALDDEDVEE. At Ser-108 the chain carries Phosphoserine. Basic and acidic residues predominate over residues 111 to 125; that stretch reads EAAERTMRQRDREAG. Residue Tyr-137 is modified to Phosphotyrosine. Residues Ser-139 and Ser-140 each carry the phosphoserine modification. A Glycyl lysine isopeptide (Lys-Gly) (interchain with G-Cter in SUMO2) cross-link involves residue Lys-178. Lys-216 carries the N6-acetyllysine modification. The C4-type zinc finger occupies 329–355; sequence CSKCNFVLGPFCQSQNQEVKPGSCPEC. Phosphoserine is present on residues Ser-381 and Ser-484. An MCM domain is found at 473 to 680; it reads IGEKIFASIA…QDEMLARFVV (208 aa). Positions 530 and 531 each coordinate ADP. The Arginine finger motif lies at 655 to 658; the sequence is SRFD.

Belongs to the MCM family. As to quaternary structure, component of the MCM2-7 complex. The complex forms a toroidal hexameric ring with the proposed subunit order MCM2-MCM6-MCM4-MCM7-MCM3-MCM5. Component of the CMG helicase complex, a hexameric ring of related MCM2-7 subunits stabilized by CDC45 and the tetrameric GINS complex. Interacts with DBF4. Interacts with KAT7. May interact with MCM10. Component of the replisome complex composed of at least DONSON, MCM2, MCM7, PCNA and TICRR. Forms a co-chaperone complex with DNAJC9 and histone H3.3-H4 heterodimers. Within the complex, interacts (via N-terminus) with DNAJC9 (via C-terminus); the interaction is histone-dependent. Interacts with AGER/RAGE; the interaction is increased following DNA replication stress and stabilizes the MCM2-7 complex at replication forks. In terms of processing, phosphorylated on Ser-108 by ATR in proliferating cells. Ser-108 proliferation is increased by genotoxic agents. Ser-40 is mediated by the CDC7-DBF4 and CDC7-DBF4B complexes, while Ser-53 phosphorylation is only mediated by the CDC7-DBF4 complex. Phosphorylation by the CDC7-DBF4 complex during G1/S phase is required for the initiation of DNA replication. Post-translationally, acetylated by MCM3AP. O-glycosylated (O-GlcNAcylated), in a cell cycle-dependent manner.

The protein resides in the nucleus. Its subcellular location is the chromosome. The enzyme catalyses ATP + H2O = ADP + phosphate + H(+). Acts as a component of the MCM2-7 complex (MCM complex) which is the replicative helicase essential for 'once per cell cycle' DNA replication initiation and elongation in eukaryotic cells. Core component of CDC45-MCM-GINS (CMG) helicase, the molecular machine that unwinds template DNA during replication, and around which the replisome is built. The active ATPase sites in the MCM2-7 ring are formed through the interaction surfaces of two neighboring subunits such that a critical structure of a conserved arginine finger motif is provided in trans relative to the ATP-binding site of the Walker A box of the adjacent subunit. The six ATPase active sites, however, are likely to contribute differentially to the complex helicase activity. Required for the entry in S phase and for cell division. Plays a role in terminally differentiated hair cells development of the cochlea and induces cells apoptosis. The sequence is that of DNA replication licensing factor MCM2 (Mcm2) from Mus musculus (Mouse).